Consider the following 258-residue polypeptide: Regulatory protein RecX (258 aa).

This sequence belongs to the RecX family.

Its subcellular location is the cytoplasm. Modulates RecA activity. The sequence is that of Regulatory protein RecX from Streptococcus mutans serotype c (strain ATCC 700610 / UA159).